The primary structure comprises 160 residues: Large ribosomal subunit protein uL22c (160 aa).

This sequence belongs to the universal ribosomal protein uL22 family. As to quaternary structure, part of the 50S ribosomal subunit.

It localises to the plastid. The protein resides in the chloroplast. Functionally, this protein binds specifically to 23S rRNA. In terms of biological role, the globular domain of the protein is located near the polypeptide exit tunnel on the outside of the subunit, while an extended beta-hairpin is found that lines the wall of the exit tunnel in the center of the 70S ribosome. The protein is Large ribosomal subunit protein uL22c (rpl22) of Lepidium virginicum (Virginia pepperweed).